The primary structure comprises 127 residues: Thioredoxin domain-containing protein 8 (127 aa).

The 126-residue stretch at 2 to 127 (VKRIKNMSEL…QLEKKIQELM (126 aa)) folds into the Thioredoxin domain. Cys32 and Cys35 are joined by a disulfide.

It belongs to the thioredoxin family. In terms of tissue distribution, testis-specific. Only expressed during spermiogenesis, prominently in the Golgi apparatus of pachytene spermatocytes and round and elongated spermatids, with a transient localization in the developing acrosome of round spermatids (at protein level).

The protein localises to the cytoplasm. Its subcellular location is the golgi apparatus. May be required for post-translational modifications of proteins required for acrosomal biogenesis. May act by reducing disulfide bonds within the sperm. This is Thioredoxin domain-containing protein 8 (Txndc8) from Mus musculus (Mouse).